The following is a 429-amino-acid chain: Cell wall protein ECM33 (429 aa).

An N-terminal signal peptide occupies residues 1-19 (MQFKNALTATAILSASALA). N-linked (GlcNAc...) asparagine glycosylation is found at Asn21, Asn56, Asn82, Asn196, Asn209, Asn227, Asn234, Asn241, Asn267, Asn279, Asn304, and Asn328. Ser339 bears the Phosphoserine mark. Over residues 361-401 (LSSTSTESSKSSATSSASSSGDASNAQANVSASASSSSSSS) the composition is skewed to low complexity. Positions 361-410 (LSSTSTESSKSSATSSASSSGDASNAQANVSASASSSSSSSKKSKGAAPE) are disordered. N-linked (GlcNAc...) asparagine glycosylation is present at Asn389. Residue Gly406 is the site of GPI-anchor amidated glycine attachment. Residues 407 to 429 (AAPELVPATSFMGVVAAVAVALL) constitute a propeptide, removed in mature form.

It belongs to the SPS2 family. Post-translationally, the GPI-anchor is attached to the protein in the endoplasmic reticulum and serves to target the protein to the cell surface. There, the glucosamine-inositol phospholipid moiety is cleaved off and the GPI-modified mannoprotein is covalently attached via its lipidless GPI glycan remnant to the 1,6-beta-glucan of the outer cell wall layer.

Its subcellular location is the cell membrane. The protein resides in the secreted. It localises to the cell wall. Functionally, required for proper cell wall integrity and for the correct assembly of the mannoprotein outer layer of the cell wall. Important for apical bud growth. The chain is Cell wall protein ECM33 (ECM33) from Saccharomyces cerevisiae (strain AWRI1631) (Baker's yeast).